Here is a 476-residue protein sequence, read N- to C-terminus: POC1 centriolar protein homolog B (476 aa).

WD repeat units follow at residues 16–55 (GHKA…RAYR), 58–97 (GHKD…KSSE), 100–139 (AHTA…FLYS), 142–181 (RHTH…CVNN), 183–223 (SDSV…LLQH), 226–265 (VHSC…LIYT), and 268–307 (GHTG…LHCK). The stretch at 429-468 (ALEHIMEQLNILTQTVSILEQRLSLTEDKLRDCLENQQKL) forms a coiled coil.

The protein belongs to the WD repeat POC1 family. In terms of assembly, interacts with POC1A. Interacts with FAM161A. Interacts with CEP44; the interaction is direct and recruits POC1B to centriolar microtubules. Forms a microtubule-associated complex with POC5, CETN2 and FAM161A. Interacts with CCDC15. In terms of processing, phosphorylated in mitotic cells that may be mediated by CDK1. As to expression, expressed in the retina.

The protein resides in the cytoplasm. The protein localises to the cytoskeleton. It localises to the microtubule organizing center. Its subcellular location is the centrosome. It is found in the centriole. The protein resides in the cilium basal body. The protein localises to the spindle pole. Functionally, plays an important role in centriole assembly and/or stability and ciliogenesis. Involved in early steps of centriole duplication, as well as in the later steps of centriole length control. Acts in concert with POC1A to ensure centriole integrity and proper mitotic spindle formation. Required for primary cilia formation, ciliary length and also cell proliferation. Required for retinal integrity. Acts as a positive regulator of centriole elongation. This chain is POC1 centriolar protein homolog B (Poc1b), found in Mus musculus (Mouse).